The primary structure comprises 449 residues: UDP-N-acetylmuramoylalanine--D-glutamate ligase (449 aa).

An ATP-binding site is contributed by 116–122 (GSNGKST).

It belongs to the MurCDEF family.

It localises to the cytoplasm. It catalyses the reaction UDP-N-acetyl-alpha-D-muramoyl-L-alanine + D-glutamate + ATP = UDP-N-acetyl-alpha-D-muramoyl-L-alanyl-D-glutamate + ADP + phosphate + H(+). The protein operates within cell wall biogenesis; peptidoglycan biosynthesis. In terms of biological role, cell wall formation. Catalyzes the addition of glutamate to the nucleotide precursor UDP-N-acetylmuramoyl-L-alanine (UMA). This Shewanella violacea (strain JCM 10179 / CIP 106290 / LMG 19151 / DSS12) protein is UDP-N-acetylmuramoylalanine--D-glutamate ligase.